Here is a 287-residue protein sequence, read N- to C-terminus: Light-independent protochlorophyllide reductase iron-sulfur ATP-binding protein (287 aa).

Residues 10–15 (GIGKST) and lysine 39 each bind ATP. A Mg(2+)-binding site is contributed by serine 14. Positions 95 and 129 each coordinate [4Fe-4S] cluster. An ATP-binding site is contributed by 180 to 181 (NR).

It belongs to the NifH/BchL/ChlL family. In terms of assembly, homodimer. Protochlorophyllide reductase is composed of three subunits; ChlL, ChlN and ChlB. Requires [4Fe-4S] cluster as cofactor.

It localises to the plastid. The protein localises to the chloroplast. The catalysed reaction is chlorophyllide a + oxidized 2[4Fe-4S]-[ferredoxin] + 2 ADP + 2 phosphate = protochlorophyllide a + reduced 2[4Fe-4S]-[ferredoxin] + 2 ATP + 2 H2O. The protein operates within porphyrin-containing compound metabolism; chlorophyll biosynthesis (light-independent). Component of the dark-operative protochlorophyllide reductase (DPOR) that uses Mg-ATP and reduced ferredoxin to reduce ring D of protochlorophyllide (Pchlide) to form chlorophyllide a (Chlide). This reaction is light-independent. The L component serves as a unique electron donor to the NB-component of the complex, and binds Mg-ATP. The protein is Light-independent protochlorophyllide reductase iron-sulfur ATP-binding protein of Nephroselmis olivacea (Green alga).